The chain runs to 287 residues: Probable 18S rRNA (guanine-N(7))-methyltransferase (287 aa).

The disordered stretch occupies residues 214–287 (GVEGEEYEQQ…FSGRKRGPKF (74 aa)). Residues 217-228 (GEEYEQQEEEDS) are compositionally biased toward acidic residues. Over residues 234-245 (SNRKRDRRRVTK) the composition is skewed to basic residues. Over residues 253-278 (KTKEWIMNKKDRQRKQGREIKNDSKF) the composition is skewed to basic and acidic residues.

The protein belongs to the class I-like SAM-binding methyltransferase superfamily. BUD23/WBSCR22 family.

The protein localises to the nucleus. Its subcellular location is the nucleoplasm. It is found in the cytoplasm. The protein resides in the perinuclear region. It carries out the reaction a guanosine in 18S rRNA + S-adenosyl-L-methionine = an N(7)-methylguanosine in 18S rRNA + S-adenosyl-L-homocysteine. Its function is as follows. S-adenosyl-L-methionine-dependent methyltransferase that specifically methylates the N(7) position of a guanine in 18S rRNA. Important for biogenesis end export of the 40S ribosomal subunit independent on its methyltransferase activity. Functionally, S-adenosyl-L-methionine-dependent methyltransferase that specifically methylates the N(7) position of a guanine in 18S rRNA. Requires the methyltransferase adapter protein TRM112 for full rRNA methyltransferase activity. Involved in the pre-rRNA processing steps leading to small-subunit rRNA production independently of its RNA-modifying catalytic activity. Important for biogenesis end export of the 40S ribosomal subunit independent on its methyltransferase activity. In Dictyostelium discoideum (Social amoeba), this protein is Probable 18S rRNA (guanine-N(7))-methyltransferase.